A 151-amino-acid chain; its full sequence is MKSMLVHIVLVIFIIAEFSTAETDHDKNRRGANMGLYAFPRVGRSDPSLANSLRDGLEAGVLDGIYGDASQEDYNEADFQKKASGLVAFPRVGRGDAELRKWAHLLALQQVLDKRTGPSASSGLWFGPRLGKRSVDAKSFADISKGQKELN.

A signal peptide spans 1–21 (MKSMLVHIVLVIFIIAEFSTA). A propeptide spanning residues 22-28 (ETDHDKN) is cleaved from the precursor. Val-42 is modified (valine amide). A propeptide spanning residues 45-80 (SDPSLANSLRDGLEAGVLDGIYGDASQEDYNEADFQ) is cleaved from the precursor. At Val-92 the chain carries Valine amide. Positions 95–113 (GDAELRKWAHLLALQQVLD) are excised as a propeptide. Leu-130 bears the Leucine amide mark. A propeptide spanning residues 134 to 151 (SVDAKSFADISKGQKELN) is cleaved from the precursor.

It belongs to the pyrokinin family. In terms of tissue distribution, in larvae, the precursor peptide is exclusively present in a single pair of neuroendocrine cells in the labial neuromere (subesophageal ganglion) and three pairs of cells in the ventral ganglion abdominal neuromeres.

The protein localises to the secreted. Functionally, CAP-1 and CAP-2, but not CAP-3 are ligands for the Capa receptor. CAP-1 and CAP-2 are probably components of the signal transduction pathway that leads to Malpighian tubule fluid secretion via the second messenger nitric oxide. CAP-3 is a ligand for the PK1-R G-protein coupled receptor. The protein is Cardio acceleratory peptide 2b (Capa) of Drosophila melanogaster (Fruit fly).